A 327-amino-acid polypeptide reads, in one-letter code: Aldo-keto reductase FVEG_12638 (327 aa).

An NADP(+)-binding site is contributed by Asp51. Tyr56 serves as the catalytic Proton donor. His122 is a substrate binding site. NADP(+)-binding positions include 152 to 153 (SE), 202 to 212 (GPLGHGWLVED), and 286 to 294 (ENFTSRDIE).

It belongs to the aldo/keto reductase family. Aldo/keto reductase 2 subfamily.

Functionally, aldo-keto reductase; part of the Fusarium detoxification of benzoxazolinone cluster 2 (FDB2) involved in the degradation of benzoxazolinones produced by the host plant. Maize, wheat, and rye produce the 2 benzoxazinone phytoanticipins 2,4-dihy-droxy-7-methoxy-1,4-benzoxazin-3-one (DIMBOA) and 2,4-dihydroxy-1,4-benzoxazin-3-one (DIBOA) that, due to their inherent instability once released, spontaneously degrade to the more stable corresponding benzoxazolinones, 6-methoxy-2-benzoxazolinone (MBOA) and 2-benzoxazolinone (BOA), respectively. The first step in the detoxification of benzoxazolinones involves the hydrolysis of the cyclic ester bond of benzoxazolinones by the FDB1 cluster gamma-lactamase MBL1 to aminophenols. MBL1 is able to convert BOA into 2-aminophenol (2-AP), as well as MBOA into 5-methoxy-2-aminophenol (2-AMP). The FDB2 cluster N-malonyltransferase FDB2/NAT1 then metabolizes aminophenols via N-malonylation to non-toxic malonamic acids. FDB2/NAT1 converts 2-AP into N-(2-hydroxyphenyl) malonamic acid (HPMA) and 2-AMP into N-(2-hydroxy-4-methoxyphenyl) malonamic acid (HMPMA). The duplicated dienlactone hydrolases DLH1 and DLH2 may provide redundant function for hydrolyzing the lactone moiety in the BOA molecule. The roles of the amidases an other enzymes encoded by the 2 FDB clusters have not been identified so far. The sequence is that of Aldo-keto reductase FVEG_12638 from Gibberella moniliformis (strain M3125 / FGSC 7600) (Maize ear and stalk rot fungus).